The chain runs to 83 residues: EVPADAVTESDPTAVALKYHRNAAESERVAAARPGLPPEEQHCENCQFMLPDQGADEWRGCSLFPGKLINLNGWCASWTLRAG.

Cys-43, Cys-46, Cys-61, and Cys-75 together coordinate [4Fe-4S] cluster.

Belongs to the high-potential iron-sulfur protein (HiPIP) family. Homodimer.

The protein localises to the periplasm. Its function is as follows. Specific class of high-redox-potential 4Fe-4S ferredoxins. Functions in anaerobic electron transport in most purple and in some other photosynthetic bacteria and in at least one genus (Paracoccus) of halophilic, denitrifying bacteria. This Isochromatium buderi (Chromatium buderi) protein is High-potential iron-sulfur protein.